The sequence spans 260 residues: Thiazole synthase (260 aa).

The Schiff-base intermediate with DXP role is filled by lysine 102. 1-deoxy-D-xylulose 5-phosphate-binding positions include glycine 163, alanine 189–glycine 190, and asparagine 211–threonine 212.

This sequence belongs to the ThiG family. In terms of assembly, homotetramer. Forms heterodimers with either ThiH or ThiS.

Its subcellular location is the cytoplasm. It catalyses the reaction [ThiS sulfur-carrier protein]-C-terminal-Gly-aminoethanethioate + 2-iminoacetate + 1-deoxy-D-xylulose 5-phosphate = [ThiS sulfur-carrier protein]-C-terminal Gly-Gly + 2-[(2R,5Z)-2-carboxy-4-methylthiazol-5(2H)-ylidene]ethyl phosphate + 2 H2O + H(+). Its pathway is cofactor biosynthesis; thiamine diphosphate biosynthesis. Its function is as follows. Catalyzes the rearrangement of 1-deoxy-D-xylulose 5-phosphate (DXP) to produce the thiazole phosphate moiety of thiamine. Sulfur is provided by the thiocarboxylate moiety of the carrier protein ThiS. In vitro, sulfur can be provided by H(2)S. The sequence is that of Thiazole synthase from Geobacter metallireducens (strain ATCC 53774 / DSM 7210 / GS-15).